Here is a 393-residue protein sequence, read N- to C-terminus: Bifunctional enzyme IspD/IspF (393 aa).

The 2-C-methyl-D-erythritol 4-phosphate cytidylyltransferase stretch occupies residues 1–234 (MTTSQRTAAI…ARLAASLGDI (234 aa)). The 2-C-methyl-D-erythritol 2,4-cyclodiphosphate synthase stretch occupies residues 235-393 (RTGTGYDVHA…SATIRLPWGA (159 aa)). Positions 241 and 243 each coordinate a divalent metal cation. 4-CDP-2-C-methyl-D-erythritol 2-phosphate is bound by residues 241 to 243 (DVH) and 267 to 268 (HS). Residue His275 participates in a divalent metal cation binding. 4-CDP-2-C-methyl-D-erythritol 2-phosphate-binding positions include 289-291 (DIG), 365-368 (TTSE), Phe372, and Arg375.

In the N-terminal section; belongs to the IspD/TarI cytidylyltransferase family. IspD subfamily. It in the C-terminal section; belongs to the IspF family. A divalent metal cation is required as a cofactor.

It catalyses the reaction 2-C-methyl-D-erythritol 4-phosphate + CTP + H(+) = 4-CDP-2-C-methyl-D-erythritol + diphosphate. It carries out the reaction 4-CDP-2-C-methyl-D-erythritol 2-phosphate = 2-C-methyl-D-erythritol 2,4-cyclic diphosphate + CMP. The protein operates within isoprenoid biosynthesis; isopentenyl diphosphate biosynthesis via DXP pathway; isopentenyl diphosphate from 1-deoxy-D-xylulose 5-phosphate: step 2/6. It participates in isoprenoid biosynthesis; isopentenyl diphosphate biosynthesis via DXP pathway; isopentenyl diphosphate from 1-deoxy-D-xylulose 5-phosphate: step 4/6. Bifunctional enzyme that catalyzes the formation of 4-diphosphocytidyl-2-C-methyl-D-erythritol from CTP and 2-C-methyl-D-erythritol 4-phosphate (MEP) (IspD), and catalyzes the conversion of 4-diphosphocytidyl-2-C-methyl-D-erythritol 2-phosphate (CDP-ME2P) to 2-C-methyl-D-erythritol 2,4-cyclodiphosphate (ME-CPP) with a corresponding release of cytidine 5-monophosphate (CMP) (IspF). This chain is Bifunctional enzyme IspD/IspF, found in Bradyrhizobium sp. (strain ORS 278).